The primary structure comprises 91 residues: Anther-specific protein RTS (91 aa).

An N-terminal signal peptide occupies residues 1–21 (MVRVGAAAAVLVLAAAAAAMA).

Functionally, required for tapetum and pollen development. This chain is Anther-specific protein RTS, found in Oryza sativa subsp. japonica (Rice).